Here is a 416-residue protein sequence, read N- to C-terminus: Lipoyl synthase, mitochondrial (416 aa).

Residues 1–33 (MAAPTRSLRRLSSFRTTISPSLTVTAPIGCRSY) constitute a mitochondrion transit peptide. Residues Cys132, Cys137, Cys143, Cys163, Cys167, Cys170, and Ser378 each contribute to the [4Fe-4S] cluster site. The Radical SAM core domain occupies 148 to 367 (DKSSATATIM…RQRALDMGFL (220 aa)). The tract at residues 396-416 (GSGTAERTVDQTAATTDEATR) is disordered. A compositionally biased stretch (polar residues) spans 405–416 (DQTAATTDEATR).

It belongs to the radical SAM superfamily. Lipoyl synthase family. The cofactor is [4Fe-4S] cluster.

Its subcellular location is the mitochondrion. It carries out the reaction [[Fe-S] cluster scaffold protein carrying a second [4Fe-4S](2+) cluster] + N(6)-octanoyl-L-lysyl-[protein] + 2 oxidized [2Fe-2S]-[ferredoxin] + 2 S-adenosyl-L-methionine + 4 H(+) = [[Fe-S] cluster scaffold protein] + N(6)-[(R)-dihydrolipoyl]-L-lysyl-[protein] + 4 Fe(3+) + 2 hydrogen sulfide + 2 5'-deoxyadenosine + 2 L-methionine + 2 reduced [2Fe-2S]-[ferredoxin]. It functions in the pathway protein modification; protein lipoylation via endogenous pathway; protein N(6)-(lipoyl)lysine from octanoyl-[acyl-carrier-protein]: step 2/2. Functionally, catalyzes the radical-mediated insertion of two sulfur atoms into the C-6 and C-8 positions of the octanoyl moiety bound to the lipoyl domains of lipoate-dependent enzymes, thereby converting the octanoylated domains into lipoylated derivatives. The polypeptide is Lipoyl synthase, mitochondrial (Penicillium rubens (strain ATCC 28089 / DSM 1075 / NRRL 1951 / Wisconsin 54-1255) (Penicillium chrysogenum)).